The chain runs to 67 residues: Large ribosomal subunit protein uL29 (67 aa).

It belongs to the universal ribosomal protein uL29 family.

In Ehrlichia ruminantium (strain Gardel), this protein is Large ribosomal subunit protein uL29.